Reading from the N-terminus, the 593-residue chain is NADH-quinone oxidoreductase subunit C/D (593 aa).

Positions 1 to 184 (MTADNALYIP…DPYSLTLAKQ (184 aa)) are NADH dehydrogenase I subunit C. An NADH dehydrogenase I subunit D region spans residues 208–593 (DYMFLNLGPN…IDFVMADVDR (386 aa)).

In the N-terminal section; belongs to the complex I 30 kDa subunit family. It in the C-terminal section; belongs to the complex I 49 kDa subunit family. As to quaternary structure, NDH-1 is composed of 13 different subunits. Subunits NuoB, CD, E, F, and G constitute the peripheral sector of the complex.

The protein localises to the cell inner membrane. The enzyme catalyses a quinone + NADH + 5 H(+)(in) = a quinol + NAD(+) + 4 H(+)(out). Functionally, NDH-1 shuttles electrons from NADH, via FMN and iron-sulfur (Fe-S) centers, to quinones in the respiratory chain. The immediate electron acceptor for the enzyme in this species is believed to be ubiquinone. Couples the redox reaction to proton translocation (for every two electrons transferred, four hydrogen ions are translocated across the cytoplasmic membrane), and thus conserves the redox energy in a proton gradient. This is NADH-quinone oxidoreductase subunit C/D from Pseudomonas syringae pv. tomato (strain ATCC BAA-871 / DC3000).